Reading from the N-terminus, the 227-residue chain is Staphylococcal superantigen-like 10 (227 aa).

Residues 1-30 (MKFTALAKATLALGILTTGTLTTEVHSGHA) form the signal peptide.

Belongs to the staphylococcal/streptococcal toxin family. As to quaternary structure, interacts with prothrombin/F2 and coagulation factor X/F12. Interacts with human CXCR4.

It is found in the secreted. Its function is as follows. Plays a role in the inhibition of host complement activation via the classical pathway by interacting with the Fc region of human IgG and thereby interfering with the IgG/C1q interaction. Also inhibits the penultimate step of plasma clotting by interacting with prothrombin/F2 and coagulation factor X/F12. Does not affect the protease activity of thrombin but interferes with the conversion of prothrombin to thrombin. Interacts with human receptor CXCR4 and specifically inhibits CXCL12-induced calcium mobilization and cell migration. In Staphylococcus aureus (strain NCTC 8325 / PS 47), this protein is Staphylococcal superantigen-like 10.